The sequence spans 487 residues: Acetyl-coenzyme A carboxylase carboxyl transferase subunit beta, chloroplastic (487 aa).

Residues 223-487 (LWIQCDNCYG…FCPLNKTEIK (265 aa)) form the CoA carboxyltransferase N-terminal domain. Zn(2+) contacts are provided by cysteine 227, cysteine 230, cysteine 243, and cysteine 246. A C4-type zinc finger spans residues 227-246 (CDNCYGLMYKKVKMNVCEQC).

The protein belongs to the AccD/PCCB family. As to quaternary structure, acetyl-CoA carboxylase is a heterohexamer composed of biotin carboxyl carrier protein, biotin carboxylase and 2 subunits each of ACCase subunit alpha and ACCase plastid-coded subunit beta (accD). Zn(2+) serves as cofactor.

The protein localises to the plastid. The protein resides in the chloroplast stroma. It carries out the reaction N(6)-carboxybiotinyl-L-lysyl-[protein] + acetyl-CoA = N(6)-biotinyl-L-lysyl-[protein] + malonyl-CoA. The protein operates within lipid metabolism; malonyl-CoA biosynthesis; malonyl-CoA from acetyl-CoA: step 1/1. Component of the acetyl coenzyme A carboxylase (ACC) complex. Biotin carboxylase (BC) catalyzes the carboxylation of biotin on its carrier protein (BCCP) and then the CO(2) group is transferred by the transcarboxylase to acetyl-CoA to form malonyl-CoA. The chain is Acetyl-coenzyme A carboxylase carboxyl transferase subunit beta, chloroplastic from Nasturtium officinale (Watercress).